The primary structure comprises 613 residues: Zinc metalloproteinase-disintegrin-like atragin (613 aa).

The signal sequence occupies residues 1–20; the sequence is MIQALLVIICLAVFPHQGSS. Residues 21–191 constitute a propeptide that is removed on maturation; the sequence is IILESGNVND…DESIEKTSQL (171 aa). In terms of domain architecture, Peptidase M12B spans 205–400; the sequence is KYIEFYVVVD…DRPQCILNKP (196 aa). The Ca(2+) site is built by glutamate 208 and aspartate 292. 2 cysteine pairs are disulfide-bonded: cysteine 316-cysteine 395 and cysteine 356-cysteine 379. 3 residues coordinate Zn(2+): histidine 341, histidine 345, and histidine 351. Cysteine 395, asparagine 398, isoleucine 410, asparagine 413, phenylalanine 415, glutamate 417, glutamate 420, and aspartate 423 together coordinate Ca(2+). The Disintegrin domain occupies 408–494; that stretch reads PPICGNYFVE…ECPTDVFQRN (87 aa). 15 cysteine pairs are disulfide-bonded: cysteine 411–cysteine 440, cysteine 422–cysteine 435, cysteine 424–cysteine 430, cysteine 434–cysteine 457, cysteine 448–cysteine 454, cysteine 453–cysteine 479, cysteine 466–cysteine 486, cysteine 473–cysteine 505, cysteine 498–cysteine 510, cysteine 517–cysteine 567, cysteine 532–cysteine 575, cysteine 542–cysteine 577, cysteine 545–cysteine 555, cysteine 562–cysteine 601, and cysteine 595–cysteine 606. Residue asparagine 436 is glycosylated (N-linked (GlcNAc...) asparagine). The D/ECD-tripeptide motif lies at 472–474; it reads DCD. Ca(2+) contacts are provided by aspartate 474, leucine 475, glutamate 477, aspartate 489, and valine 490. Residues 560 to 574 are hypervariable region that may play important roles toward cell migration; sequence VKCGRLFCKRRNSMI.

This sequence belongs to the venom metalloproteinase (M12B) family. P-III subfamily. P-IIIa sub-subfamily. Monomer. The cofactor is Zn(2+). In terms of tissue distribution, expressed by the venom gland.

The protein localises to the secreted. Snake venom zinc metalloproteinase that seems to inhibit cell migration. This activity is dominated by the local structure of the hyper-variable region. In Naja atra (Chinese cobra), this protein is Zinc metalloproteinase-disintegrin-like atragin.